Here is a 347-residue protein sequence, read N- to C-terminus: Cell division protein FtsQ (347 aa).

The interval 1 to 55 is disordered; the sequence is MARNGNPQFPDERSTATRAKATEPEELDDRFSDLEPEEDSPFLRSQKRVPVRRGP. Over 1 to 66 the chain is Cytoplasmic; it reads MARNGNPQFP…PSKKAANRVK (66 aa). A compositionally biased stretch (basic and acidic residues) spans 10 to 33; the sequence is PDERSTATRAKATEPEELDDRFSD. A helical membrane pass occupies residues 67–87; the sequence is IALIVLGVLVVIGGVWMALSA. At 88–347 the chain is on the periplasmic side; sequence YGEHSWRFRL…PTAHTSGRRH (260 aa). The region spanning 98 to 166 is the POTRA domain; the sequence is ESSDSIEVGG…DRIRVQVTER (69 aa). Positions 308-347 are disordered; the sequence is DSHPSAAKPTAPAVAPAVEKPAVAKPAVAKPTAHTSGRRH. Residues 313–340 are compositionally biased toward low complexity; it reads AAKPTAPAVAPAVEKPAVAKPAVAKPTA.

The protein belongs to the FtsQ/DivIB family. FtsQ subfamily.

The protein resides in the cell inner membrane. Essential cell division protein. This Koribacter versatilis (strain Ellin345) protein is Cell division protein FtsQ.